The primary structure comprises 165 residues: MRYFVIGTMIALAGLLVGGGVGSYFTSSKLLKQFQNIPGSPIVLSATYNKEKHLIAYTISNPGTLPIKITEKAFVFTPGKESKEKGYVLSNIPANVTIPPLSVAIVELKLKEGTEKLKVGDLVVATFTYTHPLSQDIYTVVHPFTYGVKEKQQTEKKEEKKEESK.

Residues 4–26 traverse the membrane as a helical segment; that stretch reads FVIGTMIALAGLLVGGGVGSYFT.

It is found in the membrane. This is an uncharacterized protein from Aquifex aeolicus (strain VF5).